The following is a 217-amino-acid chain: Thiamine-phosphate synthase (217 aa).

Residues 39–43 (QLRRK) and asparagine 71 contribute to the 4-amino-2-methyl-5-(diphosphooxymethyl)pyrimidine site. Mg(2+) contacts are provided by aspartate 72 and aspartate 91. Serine 110 provides a ligand contact to 4-amino-2-methyl-5-(diphosphooxymethyl)pyrimidine. 2-[(2R,5Z)-2-carboxy-4-methylthiazol-5(2H)-ylidene]ethyl phosphate is bound at residue 137–139 (SPT). Lysine 140 is a 4-amino-2-methyl-5-(diphosphooxymethyl)pyrimidine binding site. 2-[(2R,5Z)-2-carboxy-4-methylthiazol-5(2H)-ylidene]ethyl phosphate contacts are provided by residues glycine 173 and 193–194 (IS).

Belongs to the thiamine-phosphate synthase family. Mg(2+) serves as cofactor.

The enzyme catalyses 2-[(2R,5Z)-2-carboxy-4-methylthiazol-5(2H)-ylidene]ethyl phosphate + 4-amino-2-methyl-5-(diphosphooxymethyl)pyrimidine + 2 H(+) = thiamine phosphate + CO2 + diphosphate. The catalysed reaction is 2-(2-carboxy-4-methylthiazol-5-yl)ethyl phosphate + 4-amino-2-methyl-5-(diphosphooxymethyl)pyrimidine + 2 H(+) = thiamine phosphate + CO2 + diphosphate. It carries out the reaction 4-methyl-5-(2-phosphooxyethyl)-thiazole + 4-amino-2-methyl-5-(diphosphooxymethyl)pyrimidine + H(+) = thiamine phosphate + diphosphate. It functions in the pathway cofactor biosynthesis; thiamine diphosphate biosynthesis; thiamine phosphate from 4-amino-2-methyl-5-diphosphomethylpyrimidine and 4-methyl-5-(2-phosphoethyl)-thiazole: step 1/1. Functionally, condenses 4-methyl-5-(beta-hydroxyethyl)thiazole monophosphate (THZ-P) and 2-methyl-4-amino-5-hydroxymethyl pyrimidine pyrophosphate (HMP-PP) to form thiamine monophosphate (TMP). This is Thiamine-phosphate synthase from Bordetella bronchiseptica (strain ATCC BAA-588 / NCTC 13252 / RB50) (Alcaligenes bronchisepticus).